The primary structure comprises 333 residues: Nucleoid-associated protein PSPTO_1265 (333 aa).

It belongs to the YejK family.

Its subcellular location is the cytoplasm. The protein resides in the nucleoid. The polypeptide is Nucleoid-associated protein PSPTO_1265 (Pseudomonas syringae pv. tomato (strain ATCC BAA-871 / DC3000)).